The sequence spans 586 residues: Arginine--tRNA ligase (586 aa).

The 'HIGH' region motif lies at 127-137 (PNVAKEMHVGH).

It belongs to the class-I aminoacyl-tRNA synthetase family. Monomer.

Its subcellular location is the cytoplasm. It catalyses the reaction tRNA(Arg) + L-arginine + ATP = L-arginyl-tRNA(Arg) + AMP + diphosphate. The protein is Arginine--tRNA ligase (argS) of Streptomyces coelicolor (strain ATCC BAA-471 / A3(2) / M145).